The primary structure comprises 335 residues: Transcription factor E2F5 (335 aa).

The segment covering 1–18 has biased composition (low complexity); sequence MAAAEPTSSAQPTPQAQA. Positions 1–40 are disordered; the sequence is MAAAEPTSSAQPTPQAQAQPPPHGAPSSQPSAALAGGSSR. Residues 37-108 mediate DNA binding; sequence GSSRHEKSLG…KNSIQWKGVG (72 aa). Residues 66–88 form a leucine-zipper region; it reads LKAAADTLAVRQKRRIYDITNVL. The short motif at 71–108 is the DEF box element; the sequence is DTLAVRQKRRIYDITNVLEGIDLIEKKSKNSIQWKGVG. Residues 109–205 form a dimerization region; it reads AGCNTKEVID…GQNGQKKYQI (97 aa). The disordered stretch occupies residues 226 to 285; sequence SKPVVFPVPPPDDLTQPSSQSSTSVTPQKSTMAAQNLPEQHVSERSQTFQQTPAAEVSSG. The span at 238 to 256 shows a compositional bias: low complexity; that stretch reads DLTQPSSQSSTSVTPQKST. Positions 277–335 are transactivation; the sequence is TPAAEVSSGSISGDIIDELMSSDVFPLLRLSPTPADDYNFNLDDNEGVCDLFDVQILNY. Residues 312–329 form an RBL2 association region; it reads DDYNFNLDDNEGVCDLFD.

Belongs to the E2F/DP family. In terms of assembly, component of the DRTF1/E2F transcription factor complex. Binds cooperatively with DP-1 to E2F sites. Interaction with retinoblastoma protein RB1 or proteins RBL1 and RBL2 inhibits the E2F transactivation domain. Component of the DREAM complex (also named LINC complex) at least composed of E2F4, E2F5, LIN9, LIN37, LIN52, LIN54, MYBL1, MYBL2, RBL1, RBL2, RBBP4, TFDP1 and TFDP2. The complex exists in quiescent cells where it represses cell cycle-dependent genes. It dissociates in S phase when LIN9, LIN37, LIN52 and LIN54 form a subcomplex that binds to MYBL2.

It is found in the nucleus. Transcriptional activator that binds to E2F sites, these sites are present in the promoter of many genes whose products are involved in cell proliferation. May mediate growth factor-initiated signal transduction. It is likely involved in the early responses of resting cells to growth factor stimulation. Specifically required for multiciliate cell differentiation: together with MCIDAS and E2F5, binds and activate genes required for centriole biogenesis. The polypeptide is Transcription factor E2F5 (E2f5) (Mus musculus (Mouse)).